A 56-amino-acid chain; its full sequence is Large ribosomal subunit protein bL33 (56 aa).

Belongs to the bacterial ribosomal protein bL33 family.

The sequence is that of Large ribosomal subunit protein bL33 from Ehrlichia ruminantium (strain Gardel).